A 399-amino-acid chain; its full sequence is Imidazolonepropionase (399 aa).

The segment covering 1 to 13 (MSETLYTGISQLA) has biased composition (polar residues). The interval 1–20 (MSETLYTGISQLATPRPGPQ) is disordered. Positions 74 and 76 each coordinate Fe(3+). Positions 74 and 76 each coordinate Zn(2+). Arg83, Tyr146, and His176 together coordinate 4-imidazolone-5-propanoate. Residue Tyr146 coordinates N-formimidoyl-L-glutamate. Position 238 (His238) interacts with Fe(3+). His238 provides a ligand contact to Zn(2+). 4-imidazolone-5-propanoate is bound at residue Gln241. Fe(3+) is bound at residue Asp312. Asp312 contacts Zn(2+). 2 residues coordinate N-formimidoyl-L-glutamate: Asn314 and Gly316. A 4-imidazolone-5-propanoate-binding site is contributed by Ser317.

Belongs to the metallo-dependent hydrolases superfamily. HutI family. Requires Zn(2+) as cofactor. Fe(3+) is required as a cofactor.

It is found in the cytoplasm. The catalysed reaction is 4-imidazolone-5-propanoate + H2O = N-formimidoyl-L-glutamate. It functions in the pathway amino-acid degradation; L-histidine degradation into L-glutamate; N-formimidoyl-L-glutamate from L-histidine: step 3/3. Catalyzes the hydrolytic cleavage of the carbon-nitrogen bond in imidazolone-5-propanoate to yield N-formimidoyl-L-glutamate. It is the third step in the universal histidine degradation pathway. The chain is Imidazolonepropionase from Deinococcus radiodurans (strain ATCC 13939 / DSM 20539 / JCM 16871 / CCUG 27074 / LMG 4051 / NBRC 15346 / NCIMB 9279 / VKM B-1422 / R1).